A 291-amino-acid polypeptide reads, in one-letter code: Ecto-ADP-ribosyltransferase 5 (291 aa).

An N-terminal signal peptide occupies residues 1-22; sequence MALAALMIALGSLGLHTWQAQA. A disulfide bridge connects residues Cys42 and Cys258. Residues 62–252 enclose the TR mART core domain; sequence ALLRESWEAA…LVTLWSYNQT (191 aa). Residue Tyr99 coordinates NAD(+). Asn101 is a glycosylation site (N-linked (GlcNAc...) asparagine). NAD(+) is bound by residues Arg160 and Gln180. The active site involves Arg160. Residue Ser183 is part of the active site. Asn196 is a glycosylation site (N-linked (GlcNAc...) asparagine). Ser214 provides a ligand contact to NAD(+). The active site involves Glu221. The N-linked (GlcNAc...) asparagine glycan is linked to Asn250.

Belongs to the Arg-specific ADP-ribosyltransferase family.

It is found in the secreted. The catalysed reaction is L-arginyl-[protein] + NAD(+) = N(omega)-(ADP-D-ribosyl)-L-arginyl-[protein] + nicotinamide + H(+). This chain is Ecto-ADP-ribosyltransferase 5 (ART5), found in Homo sapiens (Human).